The following is a 419-amino-acid chain: MKKAFVLEGPLVLRLFRTIMILIFARLGNYIPIPGITEVESFYESSFRNTSIYNLSALSGGSNVISILTLGLGPFFSASLAVQFLVKLYPAFEKLQNEEGEEGRKTIVRYTRILTVLFCIIESFFLSNSLRSFVFNWNSISYFVVAAAVTTGSLVLVWLSEVITERGIGNGSSLLILIGNLSRFRFLINKDDFDSLNVSSQSNLYIIYIIITLVSMLIFSTLSQEGARKIPVVSAKQLIDGVEDDMRRSYIPIRFGQAGVVPIIFSSSILLFLTTSIKQLPNANIATRVILDSVNLQQIFYFFTFLVLIIFFSFFYTLIILSPSDIAKNLKKMSSVIQDTKPGVATKVYIRKFILQASFVGSILLSALILIPSILAAALGVHPLSISGITSLILSFSIINDTVRQVLAYRDTRKFLLSS.

The next 10 membrane-spanning stretches (helical) occupy residues 19–39 (IMIL…ITEV), 64–84 (VISI…AVQF), 113–133 (ILTV…LRSF), 143–163 (FVVA…SEVI), 167–189 (GIGN…FLIN), 202–222 (SNLY…FSTL), 255–275 (FGQA…FLTT), 299–319 (IFYF…YTLI), 359–379 (FVGS…AAAL), and 380–400 (GVHP…SIIN).

The protein belongs to the SecY/SEC61-alpha family. In terms of assembly, component of the plastid Sec protein translocase complex, which is composed of at least SecY and SecE.

The protein localises to the plastid. Its subcellular location is the chloroplast thylakoid membrane. Its function is as follows. The central subunit of the protein translocation channel SecYE. Consists of two halves formed by TMs 1-5 and 6-10. These two domains form a lateral gate at the front which open onto the bilayer between TMs 2 and 7, and are clamped together by SecE at the back. The channel is closed by both a pore ring composed of hydrophobic SecY resides and a short helix (helix 2A) on the extracellular side of the membrane which forms a plug. This Diacronema lutheri (Unicellular marine alga) protein is Protein translocase subunit SecY.